The chain runs to 447 residues: Glucose-6-phosphate isomerase (447 aa).

Glu288 acts as the Proton donor in catalysis. Residues His309 and Lys423 contribute to the active site.

This sequence belongs to the GPI family.

It localises to the cytoplasm. The catalysed reaction is alpha-D-glucose 6-phosphate = beta-D-fructose 6-phosphate. The protein operates within carbohydrate biosynthesis; gluconeogenesis. It participates in carbohydrate degradation; glycolysis; D-glyceraldehyde 3-phosphate and glycerone phosphate from D-glucose: step 2/4. Its function is as follows. Catalyzes the reversible isomerization of glucose-6-phosphate to fructose-6-phosphate. This Lactobacillus gasseri (strain ATCC 33323 / DSM 20243 / BCRC 14619 / CIP 102991 / JCM 1131 / KCTC 3163 / NCIMB 11718 / NCTC 13722 / AM63) protein is Glucose-6-phosphate isomerase.